Here is a 450-residue protein sequence, read N- to C-terminus: Membrane-bound lytic murein transglycosylase F 2 (450 aa).

A signal peptide spans 1-20; the sequence is MRTWIAILAVVLVLLLNACT. The interval 21 to 261 is non-LT domain; sequence DGPEDGPRLE…AMENRYYTYV (241 aa). The segment at 262–450 is LT domain; sequence GEFDFVDLRA…YRDVIRQAFE (189 aa). E308 is a catalytic residue.

In the N-terminal section; belongs to the bacterial solute-binding protein 3 family. The protein in the C-terminal section; belongs to the transglycosylase Slt family.

The protein localises to the cell outer membrane. The enzyme catalyses Exolytic cleavage of the (1-&gt;4)-beta-glycosidic linkage between N-acetylmuramic acid (MurNAc) and N-acetylglucosamine (GlcNAc) residues in peptidoglycan, from either the reducing or the non-reducing ends of the peptidoglycan chains, with concomitant formation of a 1,6-anhydrobond in the MurNAc residue.. Functionally, murein-degrading enzyme that degrades murein glycan strands and insoluble, high-molecular weight murein sacculi, with the concomitant formation of a 1,6-anhydromuramoyl product. Lytic transglycosylases (LTs) play an integral role in the metabolism of the peptidoglycan (PG) sacculus. Their lytic action creates space within the PG sacculus to allow for its expansion as well as for the insertion of various structures such as secretion systems and flagella. The protein is Membrane-bound lytic murein transglycosylase F 2 of Alkalilimnicola ehrlichii (strain ATCC BAA-1101 / DSM 17681 / MLHE-1).